The sequence spans 369 residues: Pyruvate dehydrogenase E1 component subunit alpha (369 aa).

Heterodimer of an alpha and a beta chain. Requires thiamine diphosphate as cofactor.

The catalysed reaction is N(6)-[(R)-lipoyl]-L-lysyl-[protein] + pyruvate + H(+) = N(6)-[(R)-S(8)-acetyldihydrolipoyl]-L-lysyl-[protein] + CO2. The pyruvate dehydrogenase complex catalyzes the overall conversion of pyruvate to acetyl-CoA and CO(2). It contains multiple copies of three enzymatic components: pyruvate dehydrogenase (E1), dihydrolipoamide acetyltransferase (E2) and lipoamide dehydrogenase (E3). The protein is Pyruvate dehydrogenase E1 component subunit alpha (pdhA) of Geobacillus stearothermophilus (Bacillus stearothermophilus).